Consider the following 357-residue polypeptide: 3-isopropylmalate dehydrogenase (357 aa).

The substrate site is built by Arg97, Arg107, Arg135, and Asp224. Mg(2+) is bound by residues Asp224, Asp248, and Asp252. Gly282–Asn294 contacts NAD(+).

It belongs to the isocitrate and isopropylmalate dehydrogenases family. LeuB type 1 subfamily. In terms of assembly, homodimer. The cofactor is Mg(2+). Requires Mn(2+) as cofactor.

It localises to the cytoplasm. The enzyme catalyses (2R,3S)-3-isopropylmalate + NAD(+) = 4-methyl-2-oxopentanoate + CO2 + NADH. It participates in amino-acid biosynthesis; L-leucine biosynthesis; L-leucine from 3-methyl-2-oxobutanoate: step 3/4. In terms of biological role, catalyzes the oxidation of 3-carboxy-2-hydroxy-4-methylpentanoate (3-isopropylmalate) to 3-carboxy-4-methyl-2-oxopentanoate. The product decarboxylates to 4-methyl-2 oxopentanoate. This is 3-isopropylmalate dehydrogenase from Prochlorococcus marinus subsp. pastoris (strain CCMP1986 / NIES-2087 / MED4).